A 251-amino-acid polypeptide reads, in one-letter code: Anamorsin homolog (251 aa).

Positions 1-154 (MINFSNTLVI…AENPDFNKSD (154 aa)) are N-terminal SAM-like domain. The segment at 155–167 (DDNNLVSSDEEIY) is linker. [2Fe-2S] cluster-binding residues include cysteine 170, cysteine 181, cysteine 184, and cysteine 186. Residues 170–186 (CEDKKKVVNRVCDNCTC) are fe-S binding site A. [4Fe-4S] cluster contacts are provided by cysteine 216, cysteine 219, cysteine 227, and cysteine 230. 2 consecutive short sequence motifs (cx2C motif) follow at residues 216–219 (CGNC) and 227–230 (CGSC). A fe-S binding site B region spans residues 216 to 230 (CGNCYLGDAFRCGSC).

This sequence belongs to the anamorsin family. As to quaternary structure, monomer. It depends on [2Fe-2S] cluster as a cofactor. Requires [4Fe-4S] cluster as cofactor.

The protein resides in the cytoplasm. Its subcellular location is the mitochondrion intermembrane space. Component of the cytosolic iron-sulfur (Fe-S) protein assembly (CIA) machinery. Required for the maturation of extramitochondrial Fe-S proteins. Part of an electron transfer chain functioning in an early step of cytosolic Fe-S biogenesis, facilitating the de novo assembly of a [4Fe-4S] cluster on the cytosolic Fe-S scaffold complex. Electrons are transferred from NADPH via a FAD- and FMN-containing diflavin oxidoreductase. Together with the diflavin oxidoreductase, also required for the assembly of the diferric tyrosyl radical cofactor of ribonucleotide reductase (RNR), probably by providing electrons for reduction during radical cofactor maturation in the catalytic small subunit. In Plasmodium yoelii yoelii, this protein is Anamorsin homolog.